The sequence spans 618 residues: Leucine aminopeptidase 2 (618 aa).

A peptide is bound by residues 139-141 (QCQ) and 271-276 (PYGGME). Histidine 300 serves as a coordination point for Zn(2+). The active-site Proton acceptor is the glutamate 301. Zn(2+)-binding residues include histidine 304 and glutamate 323. Tyrosine 388 acts as the Proton donor in catalysis.

The protein belongs to the peptidase M1 family. It depends on Zn(2+) as a cofactor.

Its subcellular location is the cytoplasm. It is found in the nucleus. It carries out the reaction an epoxide + H2O = an ethanediol. Aminopeptidase that preferentially cleaves di- and tripeptides. Also has low epoxide hydrolase activity (in vitro). Can hydrolyze the epoxide leukotriene LTA(4) but it forms preferentially 5,6-dihydroxy-7,9,11,14-eicosatetraenoic acid rather than the cytokine leukotriene B(4) as the product compared to the homologous mammalian enzyme (in vitro). In Aspergillus niger (strain ATCC MYA-4892 / CBS 513.88 / FGSC A1513), this protein is Leucine aminopeptidase 2.